Reading from the N-terminus, the 228-residue chain is Small ribosomal subunit protein uS3 (228 aa).

The KH type-2 domain occupies 39–107; sequence VREYLQDKLK…PVHINIEEIR (69 aa).

This sequence belongs to the universal ribosomal protein uS3 family. In terms of assembly, part of the 30S ribosomal subunit. Forms a tight complex with proteins S10 and S14.

Binds the lower part of the 30S subunit head. Binds mRNA in the 70S ribosome, positioning it for translation. This chain is Small ribosomal subunit protein uS3, found in Stutzerimonas stutzeri (strain A1501) (Pseudomonas stutzeri).